A 359-amino-acid polypeptide reads, in one-letter code: Molybdenum import ATP-binding protein ModC (359 aa).

Residues 1–236 (MNTEIKARFR…IDLPAAFADD (236 aa)) form the ABC transporter domain. Residue 34 to 41 (GHSGSGKT) coordinates ATP. The Mop domain occupies 294–359 (QSSILNCVSA…AQIKAVALLA (66 aa)).

It belongs to the ABC transporter superfamily. Molybdate importer (TC 3.A.1.8) family. In terms of assembly, the complex is composed of two ATP-binding proteins (ModC), two transmembrane proteins (ModB) and a solute-binding protein (ModA).

It is found in the cell inner membrane. The catalysed reaction is molybdate(out) + ATP + H2O = molybdate(in) + ADP + phosphate + H(+). In terms of biological role, part of the ABC transporter complex ModABC involved in molybdenum import. Responsible for energy coupling to the transport system. The protein is Molybdenum import ATP-binding protein ModC of Dechloromonas aromatica (strain RCB).